We begin with the raw amino-acid sequence, 281 residues long: MLRHSPQFSVYRIALTLFFMMLSLLYLFPIFCLLLGSLKPSSELLRVGLNLDIDPKVMSFDNYTFLFNGGSIYFKWFFNSLVLGLFTTVLTLFFSSMIGYGLAVYDFKGRNIIFVLVLIIMMVPLEVMMLPLFKLTVGLHLIDSYTGVILPFIVSPVAVFFFRQYALGLPRDLLDSARMDGCTEFGIFFRIMAPLMKPAFGAMIILQSLNSWNNFLWPLIVLRSKEMFTLPIGLSSLLSPYGNNYDMLISGSVFAILPVIIIFLFFQKYFISGLTVGGVKG.

Helical transmembrane passes span leucine 15 to leucine 35, leucine 81 to glycine 101, isoleucine 112 to leucine 132, isoleucine 142 to phenylalanine 162, phenylalanine 185 to isoleucine 205, and methionine 247 to glutamine 267. One can recognise an ABC transmembrane type-1 domain in the interval phenylalanine 77–phenylalanine 266.

This sequence belongs to the binding-protein-dependent transport system permease family. MalFG subfamily. The complex is composed of two ATP-binding proteins (MsmX), two transmembrane proteins (AraP and AraQ) and a solute-binding protein (AraN).

It localises to the cell membrane. Part of the ABC transporter complex AraNPQ involved in the uptake of arabinooligosaccharides. Transports alpha-1,5-arabinooligosaccharides, at least up to four L-arabinosyl units. Responsible for the translocation of the substrate across the membrane. The sequence is that of Arabinooligosaccharides transport system permease protein AraQ from Bacillus subtilis (strain 168).